The following is a 161-amino-acid chain: Ribonuclease H (161 aa).

Residues 12–155 enclose the RNase H type-1 domain; the sequence is QPQHVVIYTD…ADALANKGVE (144 aa). The Mg(2+) site is built by Asp-21, Glu-59, Asp-81, and Asp-147.

Belongs to the RNase H family. Monomer. Mg(2+) serves as cofactor.

It is found in the cytoplasm. It catalyses the reaction Endonucleolytic cleavage to 5'-phosphomonoester.. Functionally, endonuclease that specifically degrades the RNA of RNA-DNA hybrids. This Polaromonas naphthalenivorans (strain CJ2) protein is Ribonuclease H.